The sequence spans 314 residues: Probable tRNA pseudouridine synthase B (314 aa).

Residues 1–10 (MATRGRHRSR) show a composition bias toward basic residues. The tract at residues 1 to 30 (MATRGRHRSRTSGTSSEPMTLRAPPDERDL) is disordered. Asp72 functions as the Nucleophile in the catalytic mechanism. Positions 237–314 (LPRVTIAPSA…LVVELDRMLV (78 aa)) constitute a PUA domain.

Belongs to the pseudouridine synthase TruB family. Type 2 subfamily.

It catalyses the reaction uridine(55) in tRNA = pseudouridine(55) in tRNA. Its function is as follows. Could be responsible for synthesis of pseudouridine from uracil-55 in the psi GC loop of transfer RNAs. The sequence is that of Probable tRNA pseudouridine synthase B from Haloarcula marismortui (strain ATCC 43049 / DSM 3752 / JCM 8966 / VKM B-1809) (Halobacterium marismortui).